Consider the following 485-residue polypeptide: GTPase Obg (485 aa).

Residues 1–159 enclose the Obg domain; that stretch reads MKFVDEVRIF…LTLRLELKLL (159 aa). The 173-residue stretch at 160 to 332 folds into the OBG-type G domain; it reads ADVGLLGFPN…LMDSVAEVLF (173 aa). GTP-binding positions include 166–173, 191–195, 213–216, 284–287, and 313–315; these read GFPNAGKS, FTTLV, DIPG, NKLD, and SCA. Residues Ser-173 and Thr-193 each coordinate Mg(2+). 4 stretches are compositionally biased toward low complexity: residues 367–385, 394–428, 437–446, and 455–474; these read AGAAAATKSATKKSAAAKK, RKAGAVAKTSAARKAGTAAAKKAPARKSGTAPVKK, RKSGTAPAKK, and RKSGSSGKAAAKKASAATKR. The segment at 367-485 is disordered; the sequence is AGAAAATKSA…PARKSGGGRS (119 aa).

This sequence belongs to the TRAFAC class OBG-HflX-like GTPase superfamily. OBG GTPase family. As to quaternary structure, monomer. The cofactor is Mg(2+).

Its subcellular location is the cytoplasm. An essential GTPase which binds GTP, GDP and possibly (p)ppGpp with moderate affinity, with high nucleotide exchange rates and a fairly low GTP hydrolysis rate. Plays a role in control of the cell cycle, stress response, ribosome biogenesis and in those bacteria that undergo differentiation, in morphogenesis control. In Myxococcus xanthus (strain DK1622), this protein is GTPase Obg.